A 473-amino-acid polypeptide reads, in one-letter code: 3-isopropylmalate dehydratase large subunit (473 aa).

Positions 351, 414, and 417 each coordinate [4Fe-4S] cluster.

Belongs to the aconitase/IPM isomerase family. LeuC type 1 subfamily. As to quaternary structure, heterodimer of LeuC and LeuD. Requires [4Fe-4S] cluster as cofactor.

It carries out the reaction (2R,3S)-3-isopropylmalate = (2S)-2-isopropylmalate. Its pathway is amino-acid biosynthesis; L-leucine biosynthesis; L-leucine from 3-methyl-2-oxobutanoate: step 2/4. Its function is as follows. Catalyzes the isomerization between 2-isopropylmalate and 3-isopropylmalate, via the formation of 2-isopropylmaleate. In Paracidovorax citrulli (strain AAC00-1) (Acidovorax citrulli), this protein is 3-isopropylmalate dehydratase large subunit.